Reading from the N-terminus, the 350-residue chain is 4-hydroxy-2-oxovalerate aldolase 3 (350 aa).

In terms of domain architecture, Pyruvate carboxyltransferase spans 13-265; it reads VVFHDMCLRD…DTGVDLFRLM (253 aa). A substrate-binding site is contributed by 21 to 22; that stretch reads RD. D22 is a Mn(2+) binding site. Residue H25 is the Proton acceptor of the active site. Residues S175 and H204 each coordinate substrate. H204 and H206 together coordinate Mn(2+). Position 295 (Y295) interacts with substrate.

It belongs to the 4-hydroxy-2-oxovalerate aldolase family.

It carries out the reaction (S)-4-hydroxy-2-oxopentanoate = acetaldehyde + pyruvate. This Azotobacter vinelandii (strain DJ / ATCC BAA-1303) protein is 4-hydroxy-2-oxovalerate aldolase 3 (lapG).